Here is a 376-residue protein sequence, read N- to C-terminus: Queuine tRNA-ribosyltransferase (376 aa).

Catalysis depends on Asp-89, which acts as the Proton acceptor. Substrate-binding positions include 89–93, Asp-143, Gln-194, and Gly-221; that span reads DSGGF. Positions 252–258 are RNA binding; that stretch reads GVGLPSN. Asp-271 serves as the catalytic Nucleophile. The interval 276–280 is RNA binding; important for wobble base 34 recognition; it reads ARNGR. Zn(2+) contacts are provided by Cys-309, Cys-311, Cys-314, and His-340.

The protein belongs to the queuine tRNA-ribosyltransferase family. As to quaternary structure, homodimer. Within each dimer, one monomer is responsible for RNA recognition and catalysis, while the other monomer binds to the replacement base PreQ1. Zn(2+) serves as cofactor.

The enzyme catalyses 7-aminomethyl-7-carbaguanine + guanosine(34) in tRNA = 7-aminomethyl-7-carbaguanosine(34) in tRNA + guanine. It participates in tRNA modification; tRNA-queuosine biosynthesis. Catalyzes the base-exchange of a guanine (G) residue with the queuine precursor 7-aminomethyl-7-deazaguanine (PreQ1) at position 34 (anticodon wobble position) in tRNAs with GU(N) anticodons (tRNA-Asp, -Asn, -His and -Tyr). Catalysis occurs through a double-displacement mechanism. The nucleophile active site attacks the C1' of nucleotide 34 to detach the guanine base from the RNA, forming a covalent enzyme-RNA intermediate. The proton acceptor active site deprotonates the incoming PreQ1, allowing a nucleophilic attack on the C1' of the ribose to form the product. After dissociation, two additional enzymatic reactions on the tRNA convert PreQ1 to queuine (Q), resulting in the hypermodified nucleoside queuosine (7-(((4,5-cis-dihydroxy-2-cyclopenten-1-yl)amino)methyl)-7-deazaguanosine). This Clostridium tetani (strain Massachusetts / E88) protein is Queuine tRNA-ribosyltransferase.